Reading from the N-terminus, the 349-residue chain is Isopentenyl-diphosphate delta-isomerase (349 aa).

5-6 (RK) serves as a coordination point for substrate. Residues S61, 62 to 64 (SMT), S92, and N120 contribute to the FMN site. 92 to 94 (SMR) contacts substrate. Residue Q159 participates in substrate binding. E160 lines the Mg(2+) pocket. FMN contacts are provided by residues K189, T219, 269–271 (GLR), and 290–291 (AR).

It belongs to the IPP isomerase type 2 family. Homooctamer. Dimer of tetramers. FMN serves as cofactor. The cofactor is NADPH. Requires Mg(2+) as cofactor.

The protein resides in the cytoplasm. The enzyme catalyses isopentenyl diphosphate = dimethylallyl diphosphate. In terms of biological role, involved in the biosynthesis of isoprenoids. Catalyzes the 1,3-allylic rearrangement of the homoallylic substrate isopentenyl (IPP) to its allylic isomer, dimethylallyl diphosphate (DMAPP). The protein is Isopentenyl-diphosphate delta-isomerase of Picrophilus torridus (strain ATCC 700027 / DSM 9790 / JCM 10055 / NBRC 100828 / KAW 2/3).